The primary structure comprises 238 residues: Tetraspanin-4 (238 aa).

Topologically, residues 1–13 (MARACLQAVKYLM) are cytoplasmic. Residues 14–34 (FAFNLLFWLGGCGVLGVGIWL) form a helical membrane-spanning segment. The Extracellular segment spans residues 35 to 55 (AATQGSFATLSSSFPSLSAAN). A helical transmembrane segment spans residues 56–76 (LLIITGAFVMAIGFVGCLGAI). At 77–85 (KENKCLLLT) the chain is on the cytoplasmic side. Residues 86 to 106 (FFLLLLLVFLLEATIAILFFA) form a helical membrane-spanning segment. At 107 to 201 (YTDKIDRYAQ…ETVKVWLQEN (95 aa)) the chain is on the extracellular side. N-linked (GlcNAc...) asparagine glycosylation is found at Asn-152 and Asn-161. A helical transmembrane segment spans residues 202–222 (LLAVGIFGLCTALVQILGLTF). Residues 223 to 238 (AMTMYCQVVKADTYCA) lie on the Cytoplasmic side of the membrane.

It belongs to the tetraspanin (TM4SF) family. In terms of assembly, forms a complex with integrins. Interacts with HRH4. In terms of tissue distribution, expressed in multiple tissues but is absent in brain, lymphoid cells, and platelets.

The protein localises to the cell membrane. Its function is as follows. Structural component of specialized membrane microdomains known as tetraspanin-enriched microdomains (TERMs), which act as platforms for receptor clustering and signaling. Plays an essential role in migrasome formation and migration on retracting fibers at the rear end of migrating cells. Migrasomes are cellular organelles that form as large vesicle-like structures on retraction fibers of migrating cells. Mechanistically, acts as a membrane curvature sensor and participates in stabilizing the migrasome structure in a late stage of biogenesis. May also play a regulatory role for the histamine H4 receptor/HRH4 without affecting histamine binding to HRH4 or signaling. This is Tetraspanin-4 (TSPAN4) from Homo sapiens (Human).